A 292-amino-acid polypeptide reads, in one-letter code: MLISVPATSANLGPGFDTLGLAVDLRNEIVIKPSKFLSLSTHGEGADNPKIKKNSLFLSIFNENYKRLSGKANNFRFEFTNRIPISRGLGSSSAVIVAALSGAYAMAGVKYNKREILNQALRYEHHPDNITPAVMGGFNVACVEGDRVYSKKRRMPDYLRAVVVVPNRTISTARSRTVLPKMYRKEETVYSLSRAAYMTALFMSESWDLLRIASKDKLHQARRMKMMPELFDVQKLALKQGALMSTLSGSGSTFFNLAYEKDTDRIAQSLRARFPQFRVFVLALDNNGVITK.

Residue 84–94 (PISRGLGSSSA) coordinates ATP.

The protein belongs to the GHMP kinase family. Homoserine kinase subfamily.

The protein resides in the cytoplasm. The catalysed reaction is L-homoserine + ATP = O-phospho-L-homoserine + ADP + H(+). The protein operates within amino-acid biosynthesis; L-threonine biosynthesis; L-threonine from L-aspartate: step 4/5. Functionally, catalyzes the ATP-dependent phosphorylation of L-homoserine to L-homoserine phosphate. This Sulfurovum sp. (strain NBC37-1) protein is Homoserine kinase.